The primary structure comprises 299 residues: MDLVLSAADYYFFTPYVYPATWPEDNIIRQTISLLIVTNLGAYILYFFCATLSYYFVYDHSLMKHPQFLKNQVSREIVFTVKSLPWISIPTVSLFLLELRGYSKLYDDIGDFPNGWIHLMVSVVSFLFFTDMLIYWIHRGLHHRLVYKRIHKPHHIWKIPTPFASHAFHPVDGFLQSLPYHIYPFVFPLHKVVYLGLYVLVNVWTISIHDGDFRVPQILRPFINGSAHHTDHHMFFDYNYGQYFTLWDRIGGSFKHPSSFEGKGPHSYVKNMTEKESNSFAENGCKGKKVGNGEFTKNK.

3 helical membrane passes run 32 to 52, 79 to 99, and 117 to 137; these read ISLLIVTNLGAYILYFFCATL, FTVKSLPWISIPTVSLFLLEL, and IHLMVSVVSFLFFTDMLIYWI. The Fatty acid hydroxylase domain occupies 124–252; it reads VSFLFFTDML…YFTLWDRIGG (129 aa). Residues 138–143 carry the Histidine box-1 motif; the sequence is HRGLHH. The short motif at 151–155 is the Histidine box-2 element; that stretch reads HKPHH. A helical membrane pass occupies residues 186-206; sequence VFPLHKVVYLGLYVLVNVWTI. A Histidine box-3 motif is present at residues 228–233; sequence HHTDHH. A Phosphoserine modification is found at serine 253. The tract at residues 280–299 is disordered; it reads FAENGCKGKKVGNGEFTKNK.

The protein belongs to the sterol desaturase family. Requires Fe cation as cofactor.

It is found in the endoplasmic reticulum membrane. The enzyme catalyses a Delta(7)-sterol + 2 Fe(II)-[cytochrome b5] + O2 + 2 H(+) = a Delta(5),Delta(7)-sterol + 2 Fe(III)-[cytochrome b5] + 2 H2O. The catalysed reaction is lathosterol + 2 Fe(II)-[cytochrome b5] + O2 + 2 H(+) = 7-dehydrocholesterol + 2 Fe(III)-[cytochrome b5] + 2 H2O. It carries out the reaction 5alpha-cholesta-7,24-dien-3beta-ol + 2 Fe(II)-[cytochrome b5] + O2 + 2 H(+) = 7-dehydrodesmosterol + 2 Fe(III)-[cytochrome b5] + 2 H2O. Its pathway is steroid biosynthesis; cholesterol biosynthesis. Its function is as follows. Catalyzes the penultimate step of the biosynthesis of cholesterol, the dehydrogenation of lathosterol into 7-dehydrocholesterol (7-DHC). Cholesterol is the major sterol component in mammalian membranes and a precursor for bile acid and steroid hormone synthesis. In addition to its essential role in cholesterol biosynthesis, it also indirectly regulates ferroptosis through the production of 7-DHC. By diverting the spread of damage caused by peroxyl radicals from the phospholipid components to its sterol nucleus, 7-DHC prevents this form of cell death. The chain is Lathosterol oxidase from Mus musculus (Mouse).